The sequence spans 526 residues: 2-isopropylmalate synthase (526 aa).

The Pyruvate carboxyltransferase domain occupies 5 to 267; sequence VIIFDTTLRD…HTGIRHQEIY (263 aa). The Mn(2+) site is built by D14, H202, H204, and N238. Residues 393-526 are regulatory domain; sequence RLEYFSVQSG…VPSISTSSTH (134 aa).

It belongs to the alpha-IPM synthase/homocitrate synthase family. LeuA type 1 subfamily. In terms of assembly, homodimer. Requires Mn(2+) as cofactor.

It is found in the cytoplasm. It catalyses the reaction 3-methyl-2-oxobutanoate + acetyl-CoA + H2O = (2S)-2-isopropylmalate + CoA + H(+). It functions in the pathway amino-acid biosynthesis; L-leucine biosynthesis; L-leucine from 3-methyl-2-oxobutanoate: step 1/4. Catalyzes the condensation of the acetyl group of acetyl-CoA with 3-methyl-2-oxobutanoate (2-ketoisovalerate) to form 3-carboxy-3-hydroxy-4-methylpentanoate (2-isopropylmalate). The chain is 2-isopropylmalate synthase from Edwardsiella ictaluri (strain 93-146).